The primary structure comprises 337 residues: Cytoskeleton protein RodZ (337 aa).

Residues 1-111 (MNTEATHDQN…LGKRRKKRDG (111 aa)) lie on the Cytoplasmic side of the membrane. Residues 19–71 (LRNAREQLGLSQQAVAERLCLKVSTVRDIEEDKAPADLASTFLRGYIRSYARL) enclose the HTH cro/C1-type domain. The H-T-H motif DNA-binding region spans 30–49 (QQAVAERLCLKVSTVRDIEE). Residues 112 to 132 (WLMTFTWLVLFVVIGLSGAWW) form a helical; Signal-anchor for type II membrane protein membrane-spanning segment. At 133–337 (WQDHKAQQEE…TLNAEQSPAQ (205 aa)) the chain is on the periplasmic side. Polar residues predominate over residues 145 to 167 (TMADQSSAELSSNSEQGQSVPLN). The segment at 145–236 (TMADQSSAEL…TAATTPDGAA (92 aa)) is disordered. The span at 168–207 (TSTTTDPATTSTPPASVDTTATNTQTPAVTAPAPAVDPQQ) shows a compositional bias: low complexity. Residues 208-218 (NAVVSPSQANV) show a composition bias toward polar residues. The span at 219 to 236 (DTAATPAPTAATTPDGAA) shows a compositional bias: low complexity.

The protein belongs to the RodZ family.

Its subcellular location is the cell inner membrane. Functionally, cytoskeletal protein that is involved in cell-shape control through regulation of the length of the long axis. The chain is Cytoskeleton protein RodZ from Escherichia coli O139:H28 (strain E24377A / ETEC).